Consider the following 151-residue polypeptide: MKKIDVKILDPRVRKEFPLPTYATSGSAGLDLRACLDDAVELAPGDTTLVPTGLAIHIADPSLAAMMLPRSGLGHKHGIVLGNLVGLIDSDYQGQLMISVWNRGQDSFTIQPGERIAQMIFVPVVQAEFNLVEDFDATDRGEGGFGHSGRQ.

Residues 70 to 72, Asn-83, 87 to 89, and Met-97 each bind substrate; these read RSG and LID.

The protein belongs to the dUTPase family. The cofactor is Mg(2+).

It catalyses the reaction dUTP + H2O = dUMP + diphosphate + H(+). The protein operates within pyrimidine metabolism; dUMP biosynthesis; dUMP from dCTP (dUTP route): step 2/2. Its function is as follows. This enzyme is involved in nucleotide metabolism: it produces dUMP, the immediate precursor of thymidine nucleotides and it decreases the intracellular concentration of dUTP so that uracil cannot be incorporated into DNA. The chain is Deoxyuridine 5'-triphosphate nucleotidohydrolase from Shigella flexneri serotype 5b (strain 8401).